Reading from the N-terminus, the 341-residue chain is MNNYLRKLVEGQHLTEEEMYKAGLLLLNENILESEIAAFLVLLKAKGETAEEIYGLVRALREKALPFSNHIQGAMDNCGTGGDGAQTFNISTTSAFVLAGAGVKVAKHGNRAVSSKTGSADLLEELGVNISSTPNEIDYLLEHVGIAFLFAPAMHPALKRIMKIRKELNVPTIFNLIGPLTNPVNLETQFVGIYKRDMLLPVAQVLQKLGRKQALVVNGSGFLDEASLQGENHVVILKDNEIVETSIEPEKYGFSIVKNEEIRGGNSKENAKITLGVLSGEKSVYRDTVLFNAGLALFANGKAKTIEEGITLAAHSIDSGKALAKLNLLIAASNEELERVN.

Residues G79, 82–83 (GD), T87, 89–92 (NIST), 107–115 (KHGNRAVSS), and S119 each bind 5-phospho-alpha-D-ribose 1-diphosphate. Position 79 (G79) interacts with anthranilate. S91 is a Mg(2+) binding site. N110 provides a ligand contact to anthranilate. Position 165 (R165) interacts with anthranilate. Mg(2+)-binding residues include D224 and E225.

Belongs to the anthranilate phosphoribosyltransferase family. As to quaternary structure, homodimer. Mg(2+) serves as cofactor.

It carries out the reaction N-(5-phospho-beta-D-ribosyl)anthranilate + diphosphate = 5-phospho-alpha-D-ribose 1-diphosphate + anthranilate. It participates in amino-acid biosynthesis; L-tryptophan biosynthesis; L-tryptophan from chorismate: step 2/5. Its function is as follows. Catalyzes the transfer of the phosphoribosyl group of 5-phosphorylribose-1-pyrophosphate (PRPP) to anthranilate to yield N-(5'-phosphoribosyl)-anthranilate (PRA). In Bacillus cereus (strain AH820), this protein is Anthranilate phosphoribosyltransferase.